Consider the following 326-residue polypeptide: WD repeat-containing protein slr1409 (326 aa).

6 WD repeats span residues 47-77 (GSDV…TLWT), 88-118 (GQKP…RLWN), 129-159 (PHRA…KIFT), 169-199 (LKSG…HLIN), 210-240 (TGQG…KLWN), and 252-282 (VPTG…RFWQ).

The chain is WD repeat-containing protein slr1409 from Synechocystis sp. (strain ATCC 27184 / PCC 6803 / Kazusa).